A 1100-amino-acid chain; its full sequence is SLIT-ROBO Rho GTPase-activating protein 2 (1100 aa).

One can recognise an F-BAR domain in the interval 19-324; the sequence is TQVKEIRAQL…AAENLEANSD (306 aa). Coiled coils occupy residues 170–201 and 363–400; these read YNMD…HEEK and GELI…IQDM. Residues 181 to 203 show a composition bias toward basic and acidic residues; sequence LKEAEKQEEKQMSRSVRHEEKQT. The tract at residues 181 to 210 is disordered; the sequence is LKEAEKQEEKQMSRSVRHEEKQTPRSPDSL. Positions 496–680 constitute a Rho-GAP domain; that stretch reads VRKQEAIQII…TIIIHHESIF (185 aa). The SH3 domain occupies 738–797; it reads SDPIEAIARFDYSGRTNRELSFKKGASLLLYSRASDDWWEGRHNGTEGLVPHQYIVVQDM. Disordered regions lie at residues 800-835 and 852-938; these read GYAG…TGGH and EATS…PLDP. Basic and acidic residues predominate over residues 807-823; sequence PKADLEGSHDSVEEKVS. The span at 919-932 shows a compositional bias: polar residues; the sequence is RKSTPTGRSKSFSN. Positions 945 to 972 form a coiled coil; it reads EHSSQDIEATMNTALSELRELERQSNVK. The disordered stretch occupies residues 986–1100; the sequence is KSGGTSEPSS…PPPTDKSCPV (115 aa). Composition is skewed to polar residues over residues 987–997 and 1008–1049; these read SGGTSEPSSPL and SQHP…GSTF. A compositionally biased stretch (low complexity) spans 1067–1081; sequence SSSAGGSPAMGSPTT. Over residues 1082–1094 the composition is skewed to pro residues; sequence TIPPTPPPPPPPT.

The protein localises to the cell membrane. Its subcellular location is the cell projection. It is found in the dendritic spine. It localises to the postsynaptic density. The protein resides in the postsynaptic cell membrane. The protein localises to the lamellipodium. Its subcellular location is the cytoplasmic vesicle. It is found in the phagosome. It localises to the nucleus. The protein resides in the cytoplasm. The protein localises to the cytosol. Its function is as follows. Postsynaptic RAC1 GTPase activating protein (GAP) that plays a key role in neuronal morphogenesis and migration mainly during development of the cerebral cortex. Regulates excitatory and inhibitory synapse maturation and density in cortical pyramidal neurons. Mechanistically, acts by binding and deforming membranes, thereby regulating actin dynamics to regulate cell migration and differentiation. The chain is SLIT-ROBO Rho GTPase-activating protein 2 (srgap2) from Danio rerio (Zebrafish).